The sequence spans 278 residues: S-formylglutathione hydrolase YeiG (278 aa).

Active-site charge relay system residues include serine 145, aspartate 223, and histidine 256.

It belongs to the esterase D family.

It catalyses the reaction S-formylglutathione + H2O = formate + glutathione + H(+). Its function is as follows. Serine hydrolase involved in the detoxification of formaldehyde. Hydrolyzes S-formylglutathione to glutathione and formate. In Escherichia coli (strain UTI89 / UPEC), this protein is S-formylglutathione hydrolase YeiG (yeiG).